Consider the following 380-residue polypeptide: Cystathionine beta-lyase (380 aa).

K196 bears the N6-(pyridoxal phosphate)lysine mark.

It belongs to the trans-sulfuration enzymes family. Pyridoxal 5'-phosphate is required as a cofactor.

It localises to the cytoplasm. It catalyses the reaction L,L-cystathionine + H2O = L-homocysteine + pyruvate + NH4(+). The catalysed reaction is an S-substituted L-cysteine + H2O = a thiol + pyruvate + NH4(+). The protein operates within amino-acid biosynthesis; L-methionine biosynthesis via de novo pathway; L-homocysteine from L-cystathionine: step 1/1. Its function is as follows. The enzymatic degradation of amino acids in cheese is believed to generate aroma compounds and therefore to be essential for flavor development. Cystathionine beta-lyase (CBL) can convert cystathionine to homocysteine but is also able to catalyze an alpha, gamma elimination. With methionine as a substrate, it produces volatile sulfur compounds which are important for flavor formation in Gouda cheese. This is Cystathionine beta-lyase (metC) from Lactococcus lactis subsp. cremoris (Streptococcus cremoris).